A 549-amino-acid chain; its full sequence is Polymorphic pseudokinase ROP5 (549 aa).

The first 24 residues, 1 to 24 (MATKLARLATWLVLVGCLLWRAGA), serve as a signal peptide directing secretion. One can recognise a Protein kinase domain in the interval 234-527 (LKLVEPLRVG…LEAMETPEFL (294 aa)). Positions 241, 244, 245, 246, 263, 337, 338, 340, 343, and 393 each coordinate ATP. Residue aspartate 244 participates in ADP binding. Residues serine 246, lysine 263, methionine 337, proline 338, and alanine 340 each coordinate ADP. Residue aspartate 393 coordinates ADP. Mg(2+)-binding residues include aspartate 393 and aspartate 407. Asparagine 434 is a glycosylation site (N-linked (GlcNAc...) asparagine). Cysteine 458 and cysteine 492 are oxidised to a cystine.

This sequence belongs to the protein kinase superfamily. Ser/Thr protein kinase family. Component of a complex at least composed of ROP18 and ROP5. Interacts with GRA7. Interacts with ROP17. Interacts with mouse IRGA6/IIGP1; the interaction results in inhibition of IRGA6/IIGP1 GTPase activity and/or oligomerization.

It localises to the secreted. The protein resides in the parasitophorous vacuole. The protein localises to the cytoplasmic vesicle. Its subcellular location is the secretory vesicle. It is found in the rhoptry. Pseudokinase. Essential for virulence in the type I lineage. Mediates parasite survival in mouse monocytes. Required for the parasite ability to resist mouse innate immune effectors triggered by the IFN-gamma (IFNG). Reduces the accumulation of mouse IRGA6 (IIGP1) and IRGB6 (TGTP1/TGTP2), immunity-related GTPases (IRGs) that protect mice from infection by certain intracellular pathogens, on the parasitophorous vacuole and IRG-mediated killing of parasites by mouse cells. Regulates the activity of ROP18, an active kinase that targets IRGs to prevent IRG-mediated parasite killing by mouse cells. Acts as an allosteric inhibitor of mouse IRGA6 (IIGP1). Does not affect IFN-gamma (IFNG)-mediated parasite killing in human cells that do not possess the large variety of IRGs. This is Polymorphic pseudokinase ROP5 from Toxoplasma gondii.